A 344-amino-acid chain; its full sequence is uncharacterized protein (344 aa).

This sequence belongs to the glycosyltransferase 2 family.

This is an uncharacterized protein from Escherichia coli (strain K12).